The following is an 851-amino-acid chain: Beta-galactosidase BoGH2A (851 aa).

An N-terminal signal peptide occupies residues 1–19; sequence MMIGKLKYLMLGGCLILGS. Cysteine 20 carries N-palmitoyl cysteine lipidation. Residue cysteine 20 is the site of S-diacylglycerol cysteine attachment. The active-site Proton donor is glutamate 437. Glutamate 544 functions as the Nucleophile in the catalytic mechanism.

Belongs to the glycosyl hydrolase 2 family.

Its subcellular location is the cell inner membrane. It catalyses the reaction Hydrolysis of terminal non-reducing beta-D-galactose residues in beta-D-galactosides.. It participates in glucan metabolism; xyloglucan degradation. Functionally, catalyzes the hydrolysis of terminal non-reducing beta-D-galactose residues in beta-D-galactosides in xyloglucan degradation, converting 'L' units to 'X' units. This is Beta-galactosidase BoGH2A from Bacteroides ovatus (strain ATCC 8483 / DSM 1896 / JCM 5824 / BCRC 10623 / CCUG 4943 / NCTC 11153).